Consider the following 295-residue polypeptide: Gamma-glutamyl-L-1-hydroxyisopropylamide hydrolase (295 aa).

The Glutamine amidotransferase type-1 domain maps to 5 to 221 (RILICDGNTE…LRESARSLVE (217 aa)). The active-site Nucleophile is the cysteine 104. Residues histidine 200 and glutamate 202 contribute to the active site.

It catalyses the reaction gamma-L-glutamyl-L-alaninol + H2O = L-alaninol + L-glutamate. Functionally, involved in the degradation of isopropylamine, which is a constituent of the herbicides atrazine. Catalyzes the hydrolysis of gamma-glutamyl-L-alaninol (GALO) to L-alaninol and L-glutamate. It can also uses gamma-glutamyl-isopropylamide, gamma-glutamyl-ethylamide, L-glutamine, and gamma-glutamyl-p-nitroanilide. The polypeptide is Gamma-glutamyl-L-1-hydroxyisopropylamide hydrolase (ipuF) (Pseudomonas sp).